A 156-amino-acid polypeptide reads, in one-letter code: Rhombotin-1 (156 aa).

LIM zinc-binding domains are found at residues 22-84 and 86-148; these read KGCA…LFGT and GNCA…GQLN.

It is found in the nucleus. In terms of biological role, may be involved in gene regulation within neural lineage cells potentially by direct DNA binding or by binding to other transcription factors. This chain is Rhombotin-1, found in Xenopus laevis (African clawed frog).